The following is a 314-amino-acid chain: MKPAGGRGGWGWGGGKGGSKGGDTGSGTKGGFGARTRGSSGGGRGRGRGGGGGGGGGGGDRQRRGGPGKNKNRRKKGITVSVEPHRHEGVFIYRGAEDALVTLNMVPGVSVYGEKRVTVMENGEKQEYRTWNPFRSKLAAAILGGVDQIHIKPKSKVLYLGAASGTTVSHVSDIIGPDGLVYAVEFSHRAGRDLVNVAKKRTNIIPVLEDARHPLKYRMLIGMVDVIFADVAQPDQSRIVALNAHTFLRNGGHFLISIKANCIDSTASAEAVFASEVRKLQQENLKPQEQLTLEPYERDHAVVVGVYRPPPKSK.

A compositionally biased stretch (gly residues) spans 1-59; it reads MKPAGGRGGWGWGGGKGGSKGGDTGSGTKGGFGARTRGSSGGGRGRGRGGGGGGGGGGG. The interval 1 to 82 is disordered; that stretch reads MKPAGGRGGW…RRKKGITVSV (82 aa). The residue at position 7 (Arg7) is an Omega-N-methylarginine. Positions 64–77 are enriched in basic residues; sequence RGGPGKNKNRRKKG. Residues 166–167, 185–186, 210–211, and 230–233 each bind S-adenosyl-L-methionine; these read TT, EF, DA, and DVAQ.

This sequence belongs to the methyltransferase superfamily. Fibrillarin family. In terms of assembly, component of a box C/D small nucleolar ribonucleoprotein (snoRNP) complex composed of FBLL1, SNU13/NHP2L1, NOP56 and NOP58 and a guide snoRNA which mediates 2'-hydroxyl ribose methylation in RNAs.

The protein localises to the nucleus. The protein resides in the nucleolus. It catalyses the reaction a ribonucleotide in RNA + S-adenosyl-L-methionine = a 2'-O-methylribonucleotide in RNA + S-adenosyl-L-homocysteine + H(+). Its function is as follows. S-adenosyl-L-methionine-dependent RNA methyltransferase that catalyzes 2'-hydroxyl ribose methylation in RNAs. Functions as part of box C/D small nucleolar ribonucleoprotein (snoRNP) complexes, where guide snoRNAs ensure methylation specificity through base pairing with RNA substrates. Exhibits broad substrate specificity, methylating multiple sites on ribosomal RNAs (rRNAs) and messenger RNAs (mRNAs) depending on the guide snoRNA incorporated in the complex. Specifically expressed in brain, it regulates the expression of GAP43 by stabilizing its mRNA through methylation and thereby plays an indirect role in neuronal differentiation. This chain is RNA 2'-O-methyltransferase FBLL1, found in Mus musculus (Mouse).